The sequence spans 800 residues: Protein SPT2 homolog (800 aa).

The interval 1 to 687 (MDFHSVLRMA…PGHRPNMQPP (687 aa)) is important for interaction with DNA. A coiled-coil region spans residues 53-82 (QEIQNKEVEAKRKKEGLLAKRKELKHDRKA). 3 disordered regions span residues 70-173 (LAKR…PALN), 197-646 (KEER…MAKP), and 661-698 (VPKSINGHMNGMRSAVPPGHRPNMQPPGRPLPPITSSY). Acidic residues predominate over residues 124 to 137 (TEEDEEYMTEEELY). The span at 155–164 (PQKVAKAAPG) shows a compositional bias: low complexity. Positions 196–224 (KKEERLRTAEELKELEFLERKAQKADRKD) form a coiled coil. 2 stretches are compositionally biased toward basic and acidic residues: residues 197 to 226 (KEERLRTAEELKELEFLERKAQKADRKDPM) and 249 to 259 (HSVEKRSHENS). Positions 260-272 (KSSSTEQNGTFRK) are enriched in polar residues. Residues 273–295 (SSSDNRSREEKSGSVFHTKDSKF) show a composition bias toward basic and acidic residues. Low complexity-rich tracts occupy residues 328–360 (SGSTSLRPSSGGSSSVSGRPSGSSEKPGSSSGK), 367–377 (SSSARSSSGSG), 390–424 (GASGSGSARSVGESGSRSGKPTGASGSGLARSVGA), 443–501 (GVSG…SVSG), and 514–581 (GAPG…ASSS). Residues 608 to 626 (NSVRHNTTSISVSARSSLG) are compositionally biased toward polar residues. Residues 684-693 (MQPPGRPLPP) show a composition bias toward pro residues. The tract at residues 688–800 (GRPLPPITSS…LKSAKKMKSR (113 aa)) is important for interaction with histones. The stretch at 756 to 800 (REQQKEEARSLRLGIQEDLEELRREEEELKQKAKQLKSAKKMKSR) forms a coiled coil.

It belongs to the SPT2 family. In terms of assembly, interacts with histones. Interacts with a heterotetrameric complex formed by histone H3 and H4, especially when the histone tetramer is not bound to DNA.

It localises to the nucleus. It is found in the nucleolus. Histone chaperone that stabilizes pre-existing histone tetramers and regulates replication-independent histone exchange on chromatin. Required for normal chromatin refolding in the coding region of transcribed genes, and for the suppression of spurious transcription. Binds DNA and histones and promotes nucleosome assembly (in vitro). Facilitates formation of tetrameric histone complexes containing histone H3 and H4. Modulates RNA polymerase 1-mediated transcription. Binds DNA, with a preference for branched DNA species, such as Y-form DNA and Holliday junction DNA. The polypeptide is Protein SPT2 homolog (spty2d1) (Xenopus laevis (African clawed frog)).